Here is a 798-residue protein sequence, read N- to C-terminus: Disintegrin and metalloproteinase domain-containing protein B (798 aa).

Residues 1–23 form the signal peptide; it reads MKAFSCLLAVIATAASLFQHVDA. Residues 24-706 are Extracellular-facing; it reads SHARDKLNNI…VSDWVSRHKP (683 aa). N-linked (GlcNAc...) asparagine glycosylation is found at asparagine 32, asparagine 226, asparagine 227, asparagine 313, and asparagine 407. A Peptidase M12B domain is found at 271–510; that stretch reads KVALIGVVAD…RTILTNCLTT (240 aa). 3 cysteine pairs are disulfide-bonded: cysteine 395–cysteine 495, cysteine 448–cysteine 459, and cysteine 580–cysteine 600. A Zn(2+)-binding site is contributed by histidine 431. Glutamate 432 is an active-site residue. 2 residues coordinate Zn(2+): histidine 435 and histidine 441. Positions 519-608 constitute a Disintegrin domain; it reads GQQCGNGIVE…DCPHDIHSKD (90 aa). Residues 707–727 form a helical membrane-spanning segment; it reads IVIGVAVGAGCLLLLAIASCI. At 728 to 798 the chain is on the cytoplasmic side; sequence CGRSRRQRPR…PGHMPPTRYA (71 aa). The segment at 734–798 is disordered; the sequence is QRPRNRKMPP…PGHMPPTRYA (65 aa). Residues 775 to 792 are compositionally biased toward pro residues; the sequence is NNIPPPINAPPPAYPGHM.

The cofactor is Zn(2+).

Its subcellular location is the membrane. Probable zinc protease. The protein is Disintegrin and metalloproteinase domain-containing protein B (ADM-B) of Trichophyton verrucosum (strain HKI 0517).